The chain runs to 709 residues: Nicastrin (709 aa).

The N-terminal stretch at 1–33 (MATAGGGSGADPGSRGLLRLLSFCVLLAGLCRG) is a signal peptide. The Extracellular segment spans residues 34 to 669 (NSVERKIYIP…IFLIASKELE (636 aa)). N-linked (GlcNAc...) asparagine glycans are attached at residues asparagine 45 and asparagine 55. Intrachain disulfides connect cysteine 50-cysteine 62 and cysteine 140-cysteine 159. Asparagine 187, asparagine 200, and asparagine 204 each carry an N-linked (GlcNAc...) asparagine glycan. 2 disulfide bridges follow: cysteine 195–cysteine 213 and cysteine 230–cysteine 248. 11 N-linked (GlcNAc...) asparagine glycosylation sites follow: asparagine 264, asparagine 387, asparagine 417, asparagine 435, asparagine 464, asparagine 506, asparagine 530, asparagine 562, asparagine 573, asparagine 580, and asparagine 612. Cysteine 586 and cysteine 620 are disulfide-bonded. Residues 670 to 690 (LITLTVGFGILIFSLIVTYCI) form a helical membrane-spanning segment. Residues 691 to 709 (NAKADVLFIAPREPGAVSY) lie on the Cytoplasmic side of the membrane.

The protein belongs to the nicastrin family. As to quaternary structure, component of the gamma-secretase complex. The functional gamma-secretase complex is composed of at least four polypeptides: a presenilin homodimer (PSEN1 or PSEN2), nicastrin (NCSTN), APH1 (APH1A or APH1B) and PSENEN/PEN2. Binds to proteolytic processed C-terminal fragments C83 and C99 of the amyloid precursor protein (APP). Interacts with PSEN1 and PSEN2. Post-translationally, N-glycosylated. Detected in brain (at protein level). Widely expressed.

The protein localises to the membrane. It localises to the cytoplasmic vesicle membrane. It is found in the melanosome. Functionally, essential subunit of the gamma-secretase complex, an endoprotease complex that catalyzes the intramembrane cleavage of integral membrane proteins such as Notch receptors and APP (amyloid-beta precursor protein). The gamma-secretase complex plays a role in Notch and Wnt signaling cascades and regulation of downstream processes via its role in processing key regulatory proteins, and by regulating cytosolic CTNNB1 levels. In Homo sapiens (Human), this protein is Nicastrin (NCSTN).